A 245-amino-acid chain; its full sequence is Lactate utilization protein A 1 (245 aa).

The protein belongs to the LutA/YkgE family.

Functionally, is involved in L-lactate degradation and allows cells to grow with lactate as the sole carbon source. This is Lactate utilization protein A 1 from Bacillus mycoides (strain KBAB4) (Bacillus weihenstephanensis).